The following is a 388-amino-acid chain: MNALEITQKLISYPTITPKECGIFEYIKSLFPAFKTLECGENGVKNLFLYRIFNSPKEHAEKEHAKEKHAKENVKPLHFCFAGHIDVVPPGDNWQSDPFKPIIKEGFLYGRGAQDMKGGVGAFLSASLNFNPKTPFLLSILLTSDEEGPGIFGTRLMLEKLKEKNLLPHMAIVAEPTCEKVLGDSIKIGRRGSINGKLILKGVQGHVAYPKKCQNPIDALASVLPLISGVHLDDGDEYFDPSKLVITNLHAGLGANNVTPGSVEITFNARHSLKTTKESLKEYLEKVLKDLPHTLELESSSSPFITTSHSKLTSVLKENILKTCRTTPLLNTKGGTSDARFFSAHGIEVVEFGAINDRIHAIDERVSLKELELLEKVFLGVLEDLSEK.

Residue H84 participates in Zn(2+) binding. Residue D86 is part of the active site. D115 is a Zn(2+) binding site. E146 serves as the catalytic Proton acceptor. Positions 147, 175, and 360 each coordinate Zn(2+).

It belongs to the peptidase M20A family. DapE subfamily. Homodimer. Zn(2+) is required as a cofactor. Co(2+) serves as cofactor.

The catalysed reaction is N-succinyl-(2S,6S)-2,6-diaminopimelate + H2O = (2S,6S)-2,6-diaminopimelate + succinate. It participates in amino-acid biosynthesis; L-lysine biosynthesis via DAP pathway; LL-2,6-diaminopimelate from (S)-tetrahydrodipicolinate (succinylase route): step 3/3. Functionally, catalyzes the hydrolysis of N-succinyl-L,L-diaminopimelic acid (SDAP), forming succinate and LL-2,6-diaminopimelate (DAP), an intermediate involved in the bacterial biosynthesis of lysine and meso-diaminopimelic acid, an essential component of bacterial cell walls. This is Succinyl-diaminopimelate desuccinylase from Helicobacter pylori (strain G27).